We begin with the raw amino-acid sequence, 345 residues long: N-malonyltransferase FDB2 (345 aa).

Residue C110 is the Acyl-thioester intermediate of the active site. H158 functions as the Proton acceptor in the catalytic mechanism. D173 is a catalytic residue.

It belongs to the arylamine N-acetyltransferase family.

The protein operates within xenobiotic degradation. Its function is as follows. N-malonyltransferase; part of the Fusarium detoxification of benzoxazolinone cluster 2 (FDB2) involved in the degradation of benzoxazolinones produced by the host plant. Maize, wheat, and rye produce the 2 benzoxazinone phytoanticipins 2,4-dihy-droxy-7-methoxy-1,4-benzoxazin-3-one (DIMBOA) and 2,4-dihydroxy-1,4-benzoxazin-3-one (DIBOA) that, due to their inherent instability once released, spontaneously degrade to the more stable corresponding benzoxazolinones, 6-methoxy-2-benzoxazolinone (MBOA) and 2-benzoxazolinone (BOA), respectively. The first step in the detoxification of benzoxazolinones involves the hydrolysis of the cyclic ester bond of benzoxazolinones by the FDB1 cluster gamma-lactamase MBL1 to aminophenols. MBL1 is able to convert BOA into 2-aminophenol (2-AP), as well as MBOA into 5-methoxy-2-aminophenol (2-AMP). The FDB2 cluster N-malonyltransferase FDB2/NAT1 then metabolizes aminophenols via N-malonylation to non-toxic malonamic acids. FDB2/NAT1 converts 2-AP into N-(2-hydroxyphenyl) malonamic acid (HPMA) and 2-AMP into N-(2-hydroxy-4-methoxyphenyl) malonamic acid (HMPMA). The duplicated dienlactone hydrolases DLH1 and DLH2 may provide redundant function for hydrolyzing the lactone moiety in the BOA molecule. The roles of the amidases an other enzymes encoded by the 2 FDB clusters have not been identified so far. The protein is N-malonyltransferase FDB2 of Gibberella moniliformis (strain M3125 / FGSC 7600) (Maize ear and stalk rot fungus).